The primary structure comprises 415 residues: Probable G-protein coupled receptor 19 (415 aa).

The Extracellular portion of the chain corresponds to 1–69 (MVFAHRMDND…LNPGEVATAS (69 aa)). Asn25 and Asn52 each carry an N-linked (GlcNAc...) asparagine glycan. Residues 70 to 90 (IFFGALWLFSIFGNSLVCLVI) form a helical membrane-spanning segment. At 91–102 (HRSRRTQSTTNY) the chain is on the cytoplasmic side. Residues 103 to 123 (FVVSMACADLLISVASTPFVV) form a helical membrane-spanning segment. Residues 124 to 152 (LQFTTGRWTLGSAMCKVVRYFQYLTPGVQ) are Extracellular-facing. A disulfide bond links Cys138 and Cys210. Residues 153-173 (IYVLLSICIDRFYTIVYPLSF) traverse the membrane as a helical segment. Over 174-182 (KVSREKAKK) the chain is Cytoplasmic. A helical membrane pass occupies residues 183–203 (MIAASWILDAAFVTPVFFFYG). The Extracellular segment spans residues 204–221 (SNWDSHCNYFLPPSWEGT). A helical transmembrane segment spans residues 222–242 (AYTVIHFLVGFVIPSILIILF). Residues 243-277 (YQKVIKYIWRIGTDGRTLRRTMNIVPRTKVKTVKM) are Cytoplasmic-facing. A helical membrane pass occupies residues 278-298 (FLLLNLVFLFSWLPFHVAQLW). Topologically, residues 299 to 309 (HPHEQDYKKSS) are extracellular. A helical membrane pass occupies residues 310-332 (LVFTAVTWVSFSSSASKPTLYSI). The Cytoplasmic segment spans residues 333–415 (YNANFRRGMK…INSNPPNTFV (83 aa)).

This sequence belongs to the G-protein coupled receptor 1 family. In terms of tissue distribution, strongly expressed in the brain.

It is found in the cell membrane. G-protein coupled receptor that plays a role in the regulation of circadian rhythms and energy metabolism. Participates in maintaining proper circadian gene expression in the suprachiasmatic nucleus (SCN), the locus of the master circadian clock in the brain. May function as a coordinator of aging-associated metabolic dysfunction, stress response, DNA integrity management, and eventual senescence. Upon binding to adropin, modulates mitochondrial energy metabolism via the p44/42-PDK4 signaling pathway, influencing pyruvate dehydrogenase activity. In Mus musculus (Mouse), this protein is Probable G-protein coupled receptor 19 (Gpr19).